Here is a 146-residue protein sequence, read N- to C-terminus: NADH-quinone oxidoreductase subunit A (146 aa).

The next 3 helical transmembrane spans lie at phenylalanine 16–phenylalanine 36, phenylalanine 68–tryptophan 88, and valine 98–valine 118.

The protein belongs to the complex I subunit 3 family. In terms of assembly, NDH-1 is composed of 13 different subunits. Subunits NuoA, H, J, K, L, M, N constitute the membrane sector of the complex.

Its subcellular location is the cell inner membrane. The catalysed reaction is a quinone + NADH + 5 H(+)(in) = a quinol + NAD(+) + 4 H(+)(out). Its function is as follows. NDH-1 shuttles electrons from NADH, via FMN and iron-sulfur (Fe-S) centers, to quinones in the respiratory chain. The immediate electron acceptor for the enzyme in this species is believed to be ubiquinone. Couples the redox reaction to proton translocation (for every two electrons transferred, four hydrogen ions are translocated across the cytoplasmic membrane), and thus conserves the redox energy in a proton gradient. In Enterobacter sp. (strain 638), this protein is NADH-quinone oxidoreductase subunit A.